A 229-amino-acid polypeptide reads, in one-letter code: Large ribosomal subunit protein uL1 (229 aa).

The protein belongs to the universal ribosomal protein uL1 family. In terms of assembly, part of the 50S ribosomal subunit.

Binds directly to 23S rRNA. The L1 stalk is quite mobile in the ribosome, and is involved in E site tRNA release. In terms of biological role, protein L1 is also a translational repressor protein, it controls the translation of the L11 operon by binding to its mRNA. The polypeptide is Large ribosomal subunit protein uL1 (Chlorobium chlorochromatii (strain CaD3)).